Reading from the N-terminus, the 100-residue chain is Urease subunit gamma (100 aa).

This sequence belongs to the urease gamma subunit family. In terms of assembly, heterotrimer of UreA (gamma), UreB (beta) and UreC (alpha) subunits. Three heterotrimers associate to form the active enzyme.

The protein resides in the cytoplasm. The catalysed reaction is urea + 2 H2O + H(+) = hydrogencarbonate + 2 NH4(+). The protein operates within nitrogen metabolism; urea degradation; CO(2) and NH(3) from urea (urease route): step 1/1. The protein is Urease subunit gamma of Cereibacter sphaeroides (strain ATCC 17029 / ATH 2.4.9) (Rhodobacter sphaeroides).